A 100-amino-acid chain; its full sequence is Small ribosomal subunit protein uS14c (100 aa).

Residues 1-54 are disordered; it reads MARKSLIQRERKRQKLEQKFHSIRRSSKKEISKVSSLSGKWEIHGKLQSPPRNS.

The protein belongs to the universal ribosomal protein uS14 family. In terms of assembly, part of the 30S ribosomal subunit.

The protein resides in the plastid. It localises to the chloroplast. Binds 16S rRNA, required for the assembly of 30S particles. In Piper cenocladum (Ant piper), this protein is Small ribosomal subunit protein uS14c.